The primary structure comprises 441 residues: Anti-sigma-I factor RsgI (441 aa).

Topologically, residues 1 to 53 (MMNKGIVMDIKKHSVVVLTPNGEFITCKRKGDSCMIGEEISFDEQEQKASRFS) are cytoplasmic. The 49-residue stretch at 3-51 (NKGIVMDIKKHSVVVLTPNGEFITCKRKGDSCMIGEEISFDEQEQKASR) folds into the RsgI N-terminal anti-sigma domain. The helical transmembrane segment at 54 to 76 (IPYFLKPASLLVACFLCALLFFY) threads the bilayer. At 77–441 (NQPEEKVFAY…HQQGNEKKNQ (365 aa)) the chain is on the extracellular side. A disordered region spans residues 213-441 (ENEKNKSVTP…HQQGNEKKNQ (229 aa)). Polar residues predominate over residues 219–230 (SVTPPATPSNPV). The segment covering 240-251 (PDSSPDVVPDLS) has biased composition (low complexity). Residues 252–281 (SVKDKKYEKPEYKEQKKIEEQPTKQIKENN) show a composition bias toward basic and acidic residues. 3 stretches are compositionally biased toward low complexity: residues 282-328 (GRGS…QQGN), 336-358 (NNGH…QQGN), and 366-408 (NNGH…NGRG). A compositionally biased stretch (polar residues) spans 411 to 428 (KENVGNEQGNNGRGSQQE). Residues 429–441 (NRGHQQGNEKKNQ) are compositionally biased toward basic and acidic residues.

As to quaternary structure, interacts (via RsgI N-terminal anti-sigma domain) with SigI.

Its subcellular location is the cell membrane. Anti-sigma factor for SigI. Negatively regulates SigI activity through direct interaction. Has no direct effect on virulence gene expression. The chain is Anti-sigma-I factor RsgI from Bacillus anthracis.